Consider the following 490-residue polypeptide: Secretory immunoglobulin A-binding protein EsiB (490 aa).

A signal peptide spans 1–23; the sequence is MKKSLLAVMLTGLFALVSLPALG. Sel1-like repeat units lie at residues 39–74, 77–109, 111–145, 153–182, 185–218, 222–254, 256–290, 291–327, 328–361, 364–397, and 399–430; these read AKAQ…EQGY, AEYV…ALKG, PQAQ…AEQG, MGDA…EQGN, SCNQ…TSGD, QLHL…EQGN, IAQF…EQGN, SDGQ…EQGD, ATAQ…AAKG, AAQF…AEQG, and SAAQ…DTAS. Residues H122, E159, and D161 each coordinate Mg(2+).

As to quaternary structure, interacts with human secreted IgA (SIgA) at least via resides 244-260. The cofactor is Mg(2+).

The protein resides in the cell surface. Functionally, upon host (human neutrophil) infection interferes with productive FCAR signaling, inhibiting secreted IgA (SIgA) effector functions and probably avoiding neutrophil activation. Inhibits the SIgA-mediated oxidative burst by neutrophils, decreases generation of ROS (reactive oxygen species) by neutrophils and reduces chemotaxis by neutrophils, all of which are SIgA effector functions used to stimulate the immune response. Does not block SIgA-binding to its receptor (FCAR) on neutrophils, but it decreases SIgA-stimulated phosphorylation of cytoplasmic proteins, including phospholipase C-gamma and MAP kinases, all actions that may be advantageous to the pathogen. The chain is Secretory immunoglobulin A-binding protein EsiB from Escherichia coli O6:H1 (strain CFT073 / ATCC 700928 / UPEC).